The sequence spans 245 residues: Orotidine 5'-phosphate decarboxylase (245 aa).

Substrate-binding positions include aspartate 22, lysine 44, 71-80, threonine 131, arginine 192, glutamine 201, glycine 221, and arginine 222; that span reads DLKFHDIPNT. Lysine 73 acts as the Proton donor in catalysis.

This sequence belongs to the OMP decarboxylase family. Type 1 subfamily. Homodimer.

It catalyses the reaction orotidine 5'-phosphate + H(+) = UMP + CO2. It participates in pyrimidine metabolism; UMP biosynthesis via de novo pathway; UMP from orotate: step 2/2. In terms of biological role, catalyzes the decarboxylation of orotidine 5'-monophosphate (OMP) to uridine 5'-monophosphate (UMP). This is Orotidine 5'-phosphate decarboxylase from Shigella boydii serotype 18 (strain CDC 3083-94 / BS512).